The following is a 207-amino-acid chain: Protein Nef (207 aa).

Gly-2 is lipidated: N-myristoyl glycine; by host. A Phosphoserine; by host modification is found at Ser-6. Residues 62 to 66 are acidic; interacts with host PACS1 and PACS2; stabilizes the interaction of NEF/MHC-I with host AP1M1; necessary for MHC-I internalization; the sequence is EEDSE. The segment at 70–79 is SH3-binding; interaction with Src family tyrosine kinases; sequence PVRPQVPLRP. Residues 73-76 carry the PxxP; stabilizes the interaction of NEF/MHC-I with host AP1M1; necessary for MHC-I internalization motif; it reads PQVP. The interval 109–125 is mediates dimerization, Nef-PTE1 interaction; it reads EILDLWVYNTQGYFPDW. Positions 149–181 are binding to ATP6V1H; that stretch reads MDPAEVEEANKGENNSLLHPICQHGMEDEDREV. The short motif at 165 to 166 is the Dileucine internalization motif; necessary for CD4 internalization element; sequence LL. The Diacidic; necessary for CD4 internalization signature appears at 175–176; that stretch reads ED.

It belongs to the lentivirus primate group Nef protein family. In terms of assembly, monomer; cytosolic form. Homodimer; membrane bound form. Interacts with Nef associated p21-activated kinase (PAK2); this interaction activates PAK2. Associates with the Nef-MHC-I-AP1 complex; this complex is required for MHC-I internalization. Interacts (via C-terminus) with host PI3-kinase. Interacts with host PACS1; this interaction seems to be weak. Interacts with host PACS2. Interacts with host LCK and MAPK3; these interactions inhibit the kinase activity of the latter. Interacts with host ATP6V1H; this interaction may play a role in CD4 endocytosis. Associates with the CD4-Nef-AP2 complex; this complex is required for CD4 internalization. Interacts with host AP2 subunit alpha and AP2 subunit sigma2. Interacts with TCR-zeta chain; this interaction up-regulates the Fas ligand (FasL) surface expression. Interacts with host HCK, LYN, and SRC; these interactions activate the Src family kinases. Interacts with MAP3K5; this interaction inhibits the Fas and TNFR-mediated death signals. Interacts with beta-COP and PTE1. Interacts with human RACK1; this increases Nef phosphorylation by PKC. Interacts with TP53; this interaction decreases the half-life of TP53, protecting the infected cell against p53-mediated apoptosis. Post-translationally, the virion-associated Nef proteins are cleaved by the viral protease to release the soluble C-terminal core protein. Nef is probably cleaved concomitantly with viral structural proteins on maturation of virus particles. In terms of processing, myristoylated. Phosphorylated on serine residues, probably by host PKCdelta and theta.

The protein localises to the host cell membrane. The protein resides in the virion. Its subcellular location is the secreted. It localises to the host Golgi apparatus membrane. Factor of infectivity and pathogenicity, required for optimal virus replication. Alters numerous pathways of T-lymphocyte function and down-regulates immunity surface molecules in order to evade host defense and increase viral infectivity. Alters the functionality of other immunity cells, like dendritic cells, monocytes/macrophages and NK cells. Its function is as follows. In infected CD4(+) T-lymphocytes, down-regulates the surface MHC-I, mature MHC-II, CD4, CD28, CCR5 and CXCR4 molecules. Mediates internalization and degradation of host CD4 through the interaction of with the cytoplasmic tail of CD4, the recruitment of AP-2 (clathrin adapter protein complex 2), internalization through clathrin coated pits, and subsequent transport to endosomes and lysosomes for degradation. Diverts host MHC-I molecules to the trans-Golgi network-associated endosomal compartments by an endocytic pathway to finally target them for degradation. MHC-I down-regulation may involve AP-1 (clathrin adapter protein complex 1) or possibly Src family kinase-ZAP70/Syk-PI3K cascade recruited by PACS2. In consequence infected cells are masked for immune recognition by cytotoxic T-lymphocytes. Decreasing the number of immune receptors also prevents reinfection by more HIV particles (superinfection). Down-regulates host SERINC3 and SERINC5 thereby excluding these proteins from the viral particles. Virion infectivity is drastically higher when SERINC3 or SERINC5 are excluded from the viral envelope, because these host antiviral proteins impair the membrane fusion event necessary for subsequent virion penetration. Functionally, bypasses host T-cell signaling by inducing a transcriptional program nearly identical to that of anti-CD3 cell activation. Interaction with TCR-zeta chain up-regulates the Fas ligand (FasL). Increasing surface FasL molecules and decreasing surface MHC-I molecules on infected CD4(+) cells send attacking cytotoxic CD8+ T-lymphocytes into apoptosis. In terms of biological role, plays a role in optimizing the host cell environment for viral replication without causing cell death by apoptosis. Protects the infected cells from apoptosis in order to keep them alive until the next virus generation is ready to strike. Inhibits the Fas and TNFR-mediated death signals by blocking MAP3K5/ASK1. Decreases the half-life of TP53, protecting the infected cell against p53-mediated apoptosis. Inhibits the apoptotic signals regulated by the Bcl-2 family proteins through the formation of a Nef/PI3-kinase/PAK2 complex that leads to activation of PAK2 and induces phosphorylation of host BAD. Extracellular Nef protein targets CD4(+) T-lymphocytes for apoptosis by interacting with CXCR4 surface receptors. This Homo sapiens (Human) protein is Protein Nef.